The chain runs to 661 residues: Ubiquitin carboxyl-terminal hydrolase 25 (661 aa).

Residues 24–335 enclose the USP domain; it reads LGLRNLGNTC…KAYILFFSRS (312 aa). Cysteine 33 serves as the catalytic Nucleophile. Catalysis depends on histidine 294, which acts as the Proton acceptor. Disordered regions lie at residues 387-406 and 449-558; these read GNLASSKPHKFIRPKPRAEQ and FHQD…LCSS. The segment covering 449–461 has biased composition (basic and acidic residues); the sequence is FHQDENIAPKANK. Composition is skewed to polar residues over residues 462–475 and 545–558; these read ENSVSVLPTKVNSG and NGVSTTQSKGLCSS.

This sequence belongs to the peptidase C19 family.

The catalysed reaction is Thiol-dependent hydrolysis of ester, thioester, amide, peptide and isopeptide bonds formed by the C-terminal Gly of ubiquitin (a 76-residue protein attached to proteins as an intracellular targeting signal).. Functionally, recognizes and hydrolyzes the peptide bond at the C-terminal Gly of ubiquitin. Involved in the processing of poly-ubiquitin precursors as well as that of ubiquitinated proteins. The protein is Ubiquitin carboxyl-terminal hydrolase 25 (UBP25) of Arabidopsis thaliana (Mouse-ear cress).